Here is a 179-residue protein sequence, read N- to C-terminus: ECF RNA polymerase sigma factor SigF (179 aa).

The interval 33–93 (RLRAYFMRRM…KLIDHWRRRK (61 aa)) is sigma-70 factor domain-2. Residues 51 to 64 (DLVQETLLAVHLKR) carry the Polymerase core binding motif. The segment at 123–170 (ALASLPQRQRMLVSDVKLTGLSLAEAGARAGISEGAAKVALHRALKAL) is sigma-70 factor domain-4. The segment at residues 145–164 (LAEAGARAGISEGAAKVALH) is a DNA-binding region (H-T-H motif).

The protein belongs to the sigma-70 factor family. ECF subfamily.

The protein localises to the cytoplasm. In terms of biological role, sigma factors are initiation factors that promote the attachment of RNA polymerase to specific initiation sites and are then released. Extracytoplasmic function (ECF) sigma factors are held in an inactive form by a cognate anti-sigma factor (NrsF in this case) until they are released. Up-regulates expression of 4 operons (sigF-nrsF, CCNA_02834, CCNA_03001 to CCNA_02999 and CCNA_03363 to CCNA_03366) in response to potassium dichromate (K(2)Cr(2)O(7)) or cadmium chloride (CdCl(2)). Overexpression of sigF leads to higher expression of its regulon. The polypeptide is ECF RNA polymerase sigma factor SigF (Caulobacter vibrioides (strain NA1000 / CB15N) (Caulobacter crescentus)).